Reading from the N-terminus, the 774-residue chain is Vezatin (774 aa).

A run of 2 helical transmembrane segments spans residues 138–158 (IATP…AVAA) and 163–183 (SISS…FTVL). Residues 430–457 (VRSLQLHLKALLNEVIVLEDELDKLSSC) are a coiled coil. Positions 746–757 (FGDEWDDDDDNE) are enriched in acidic residues. The disordered stretch occupies residues 746 to 774 (FGDEWDDDDDNEDHDHDKERNNDSSQLEG). The segment covering 758–767 (DHDHDKERNN) has biased composition (basic and acidic residues).

The protein belongs to the vezatin family. As to quaternary structure, interacts with myosin VIIa and the cadherin-catenins complex.

Its subcellular location is the cell membrane. The protein resides in the cell junction. It localises to the adherens junction. It is found in the nucleus. Its function is as follows. Plays a pivotal role in the establishment of adherens junctions and their maintenance in adult life. The chain is Vezatin (vezt) from Xenopus laevis (African clawed frog).